Reading from the N-terminus, the 249-residue chain is MGADVEQDDTEQYLKQGTLAVLGVLRELLQNQTPMRVSHPRGQFITRLLHVDKTNMVIDFGSNDYDNQLAQEANELHIVADTRGARIELILTSLQMSEYEGLPAFTAALPGQLKMIQRREFFRVDAPLNPIFFCYVPWPDGTGEGRLRLQDLSIGGIGMLSEGTVPDALSCGDTIKKLRLEMGEYGRFVVDAQLISIGKHSVVGSKCETVVTPRLSLRFLSLNAAQERELQQVIFSLERLARDKAKRFQ.

Residues 117-236 (QRREFFRVDA…ERELQQVIFS (120 aa)) enclose the PilZ domain.

The protein belongs to the YcgR family. As to quaternary structure, monomer. Interacts with the flagellar basal bodies.

Its subcellular location is the bacterial flagellum basal body. Acts as a flagellar brake, regulating swimming and swarming in a bis-(3'-5') cyclic diguanylic acid (c-di-GMP)-dependent manner. Binds 1 c-di-GMP dimer per subunit. Increasing levels of c-di-GMP lead to decreased motility. This Erwinia tasmaniensis (strain DSM 17950 / CFBP 7177 / CIP 109463 / NCPPB 4357 / Et1/99) protein is Flagellar brake protein YcgR.